A 150-amino-acid chain; its full sequence is UPF0756 membrane protein ACICU_02320 (150 aa).

The next 4 membrane-spanning stretches (helical) occupy residues 1–21, 45–65, 83–103, and 115–135; these read MLAQFYVNLVVLLVLLICGLL, FFPYIQAHGLNLGILILTIGV, FISFKSLVAIAIGLLVAWLGG, and VVAGLLIGTVAGVALLRGVPV.

It belongs to the UPF0756 family.

It is found in the cell membrane. The polypeptide is UPF0756 membrane protein ACICU_02320 (Acinetobacter baumannii (strain ACICU)).